The primary structure comprises 791 residues: Nuclear cap-binding protein subunit 1-A (791 aa).

The disordered stretch occupies residues 1 to 24 (MSRRRHSDENDGGQAHKRRKTSEP). The 213-residue stretch at 28 to 240 (EDRLESLICR…CLWAQIQKLK (213 aa)) folds into the MIF4G domain. Residues 641–714 (LHSTIRKMNK…SEQKNLFLVI (74 aa)) adopt a coiled-coil conformation. A disordered region spans residues 664–687 (QRLAKQHKHRDSDDNDEDSGRKDG).

The protein belongs to the NCBP1 family. In terms of assembly, component of the nuclear cap-binding complex (CBC), a heterodimer composed of ncbp1/cbp80 and ncbp2/cbp20 that interacts with m7GpppG-capped RNA. Component of an alternative nuclear cap-binding complex (CBC) composed of ncbp1/cbp80 and ncbp3.

The protein localises to the nucleus. It localises to the cytoplasm. In terms of biological role, component of the cap-binding complex (CBC), which binds cotranscriptionally to the 5'-cap of pre-mRNAs and is involved in various processes such as pre-mRNA splicing, translation regulation, nonsense-mediated mRNA decay, RNA-mediated gene silencing (RNAi) by microRNAs (miRNAs) and mRNA export. The CBC complex is involved in mRNA export from the nucleus, leading to the recruitment of the mRNA export machinery to the 5'-end of mRNA and to mRNA export in a 5' to 3' direction through the nuclear pore. The CBC complex is also involved in mediating U snRNA and intronless mRNAs export from the nucleus. The CBC complex is essential for a pioneer round of mRNA translation, before steady state translation when the CBC complex is replaced by cytoplasmic cap-binding protein eIF4E. The pioneer round of mRNA translation mediated by the CBC complex plays a central role in nonsense-mediated mRNA decay (NMD), NMD only taking place in mRNAs bound to the CBC complex, but not on eIF4E-bound mRNAs. The CBC complex enhances NMD in mRNAs containing at least one exon-junction complex (EJC), promoting the interaction between UPF1 and UPF2. The CBC complex is also involved in 'failsafe' NMD, which is independent of the EJC complex, while it does not participate in Staufen-mediated mRNA decay (SMD). During cell proliferation, the CBC complex is also involved in microRNAs (miRNAs) biogenesis via its interaction with SRRT/ARS2 and is required for miRNA-mediated RNA interference. The CBC complex also acts as a negative regulator of parn, thereby acting as an inhibitor of mRNA deadenylation. In the CBC complex, NCBP1/CBP80 does not bind directly capped RNAs (m7GpppG-capped RNA) but is required to stabilize the movement of the N-terminal loop of NCBP2/CBP20 and lock the CBC into a high affinity cap-binding state with the cap structure. Associates with NCBP3 to form an alternative cap-binding complex (CBC) which plays a key role in mRNA export. The conventional CBC with NCBP2 binds both small nuclear RNA (snRNA) and messenger (mRNA) and is involved in their export from the nucleus whereas the alternative CBC with NCBP3 does not bind snRNA and associates only with mRNA thereby playing a role only in mRNA export. This chain is Nuclear cap-binding protein subunit 1-A (ncbp1-a), found in Xenopus laevis (African clawed frog).